The following is a 301-amino-acid chain: 33 kDa chaperonin (301 aa).

Cystine bridges form between Cys239–Cys241 and Cys272–Cys275.

The protein belongs to the HSP33 family. Under oxidizing conditions two disulfide bonds are formed involving the reactive cysteines. Under reducing conditions zinc is bound to the reactive cysteines and the protein is inactive.

The protein localises to the cytoplasm. Its function is as follows. Redox regulated molecular chaperone. Protects both thermally unfolding and oxidatively damaged proteins from irreversible aggregation. Plays an important role in the bacterial defense system toward oxidative stress. This is 33 kDa chaperonin from Trichormus variabilis (strain ATCC 29413 / PCC 7937) (Anabaena variabilis).